We begin with the raw amino-acid sequence, 1039 residues long: Antigenic heat-stable 120 kDa protein (1039 aa).

Disordered stretches follow at residues 1-115, 408-438, and 1020-1039; these read MSKD…TSDP, SSIETPTTTQVPPITPANQPLQPETSQMPQP, and QSENLNKSTPIKRESSFPPR. Positions 31–44 are enriched in polar residues; sequence PISSTANKDGNPDT. The segment covering 54–69 has biased composition (basic and acidic residues); the sequence is EYTEEQKQKLEQEQKE. Residues 85-114 show a composition bias toward low complexity; the sequence is FSFTPASSTQSTPSISSLSGGISSDSQTSD. The span at 424-438 shows a compositional bias: polar residues; sequence ANQPLQPETSQMPQP. The span at 1030-1039 shows a compositional bias: basic and acidic residues; that stretch reads IKRESSFPPR.

Its subcellular location is the cytoplasm. The sequence is that of Antigenic heat-stable 120 kDa protein (sca4) from Rickettsia felis (strain ATCC VR-1525 / URRWXCal2) (Rickettsia azadi).